Consider the following 95-residue polypeptide: MKNPRDILIKPVVTEKSTGLLAENKYTFIVDLNANKTEVKKAVEEIFKVKVEKVNTMRVKGKLKRVRQFTGKTPDRKKAIVTLKEGDKIEIFEGL.

It belongs to the universal ribosomal protein uL23 family. As to quaternary structure, part of the 50S ribosomal subunit. Contacts protein L29, and trigger factor when it is bound to the ribosome.

Its function is as follows. One of the early assembly proteins it binds 23S rRNA. One of the proteins that surrounds the polypeptide exit tunnel on the outside of the ribosome. Forms the main docking site for trigger factor binding to the ribosome. This is Large ribosomal subunit protein uL23 from Desulforamulus reducens (strain ATCC BAA-1160 / DSM 100696 / MI-1) (Desulfotomaculum reducens).